A 533-amino-acid chain; its full sequence is Na(+)/H(+) antiporter NhaB (533 aa).

The next 10 helical transmembrane spans lie at 28–50 (FLIINPLLFFYVDPFVAGWVLVL), 67–87 (PGGLLAIEAVAIGMTSASQVL), 96–116 (VLLLLVFMVAGIYFMKQLLLF), 131–165 (VSLMFCLASAFLSAFLDALTVIAVIIAVAVGFYSI), 254–274 (VPVLISGILTCYLVEKFGIFG), 316–336 (LIAGLALHLASVGLIGLSVII), 364–384 (LAVFFAVVGVIIDQHLFAPVI), 396–416 (LVIFYIANGLLSMVSDNVFVG), 454–474 (ATPNGQAAFLFLLTSALAPLI), and 481–501 (MVWMALPYTIVLSIVGVMAIQ).

This sequence belongs to the NhaB Na(+)/H(+) (TC 2.A.34) antiporter family.

It localises to the cell inner membrane. It carries out the reaction 2 Na(+)(in) + 3 H(+)(out) = 2 Na(+)(out) + 3 H(+)(in). Its function is as follows. Na(+)/H(+) antiporter that extrudes sodium in exchange for external protons. The protein is Na(+)/H(+) antiporter NhaB of Shewanella baltica (strain OS195).